An 82-amino-acid chain; its full sequence is MVFLLCFFLVADVSYGINKDCLLPMDVGRCRASHPRYYYNSSSKRCEKFIYGGCRGNANNFHTLEECEKVCGVRSRDSPKEN.

Positions 1–16 (MVFLLCFFLVADVSYG) are cleaved as a signal peptide. Residues 21-71 (CLLPMDVGRCRASHPRYYYNSSSKRCEKFIYGGCRGNANNFHTLEECEKVC) form the BPTI/Kunitz inhibitor domain. Intrachain disulfides connect C21/C71, C30/C54, and C46/C67. The propeptide occupies 75–82 (SRDSPKEN).

It belongs to the venom Kunitz-type family. Sea anemone type 2 potassium channel toxin subfamily.

The protein localises to the secreted. It localises to the nematocyst. Functionally, dual-function toxin that inhibits both the serine protease trypsin (Kd=30 nM) and voltage-gated potassium channels Kv1.2/KCNA2 (IC(50)=2800 nM). In Anemonia viridis (Snakelocks anemone), this protein is U-actitoxin-Avd3f.